The following is a 320-amino-acid chain: o-succinylbenzoate synthase (320 aa).

Lys-133 acts as the Proton donor in catalysis. Mg(2+) contacts are provided by Asp-161, Glu-190, and Asp-213. The active-site Proton acceptor is Lys-235.

The protein belongs to the mandelate racemase/muconate lactonizing enzyme family. MenC type 1 subfamily. The cofactor is a divalent metal cation.

It catalyses the reaction (1R,6R)-6-hydroxy-2-succinyl-cyclohexa-2,4-diene-1-carboxylate = 2-succinylbenzoate + H2O. The protein operates within quinol/quinone metabolism; 1,4-dihydroxy-2-naphthoate biosynthesis; 1,4-dihydroxy-2-naphthoate from chorismate: step 4/7. It participates in quinol/quinone metabolism; menaquinone biosynthesis. Converts 2-succinyl-6-hydroxy-2,4-cyclohexadiene-1-carboxylate (SHCHC) to 2-succinylbenzoate (OSB). The sequence is that of o-succinylbenzoate synthase from Salmonella choleraesuis (strain SC-B67).